The primary structure comprises 178 residues: uncharacterized protein (178 aa).

Residues 1 to 16 show a composition bias toward basic and acidic residues; the sequence is MNKRTSVDASKEDLHP. A disordered region spans residues 1–43; sequence MNKRTSVDASKEDLHPADPQSGEGVPPNRKNTKTSPRGEGTAP.

This is an uncharacterized protein from Homo sapiens (Human).